Here is a 736-residue protein sequence, read N- to C-terminus: Meiotic expression up-regulated protein 27 (736 aa).

Belongs to the UPF0300 family.

The chain is Meiotic expression up-regulated protein 27 (meu27) from Schizosaccharomyces pombe (strain 972 / ATCC 24843) (Fission yeast).